The chain runs to 283 residues: 4-diphosphocytidyl-2-C-methyl-D-erythritol kinase (283 aa).

Lys-10 is an active-site residue. Residue 99–109 (PMGGGLGGGSS) participates in ATP binding. Asp-141 is a catalytic residue.

This sequence belongs to the GHMP kinase family. IspE subfamily. Homodimer.

The enzyme catalyses 4-CDP-2-C-methyl-D-erythritol + ATP = 4-CDP-2-C-methyl-D-erythritol 2-phosphate + ADP + H(+). It functions in the pathway isoprenoid biosynthesis; isopentenyl diphosphate biosynthesis via DXP pathway; isopentenyl diphosphate from 1-deoxy-D-xylulose 5-phosphate: step 3/6. Its function is as follows. Catalyzes the phosphorylation of the position 2 hydroxy group of 4-diphosphocytidyl-2C-methyl-D-erythritol. This Escherichia coli O157:H7 (strain EC4115 / EHEC) protein is 4-diphosphocytidyl-2-C-methyl-D-erythritol kinase.